Consider the following 230-residue polypeptide: MLGFTINKPDVEGVFIKRINRFLGIGLINGVESLVHIHDPGRLKELLKPGIKFYAYHKDSGKTRFYLTAVDLGNELVLINSAIHNNVAAWLIENGLILKGYEVLRREPRFSGGRFDLMLKSPKGGYTMVEVKGVTLEEDGVAKFPDAPTLRGARHMIKLAKAIEEGYEAYVIFLVLRSNALLFTPNVSLDPRFSNALKYAIEHGVKVLAYKLALTRDWVLLPMGRVNVIL.

The protein belongs to the SfsA family.

This Caldivirga maquilingensis (strain ATCC 700844 / DSM 13496 / JCM 10307 / IC-167) protein is Sugar fermentation stimulation protein homolog.